Reading from the N-terminus, the 459-residue chain is Cyclic GMP-AMP synthase-like receptor 2 (459 aa).

Residues serine 68 and 79–81 each bind ATP; that span reads EFD. Mg(2+) contacts are provided by glutamate 79, aspartate 81, and aspartate 199. Residues aspartate 199 and 248 to 255 each bind GTP; that span reads RSSFYAVE. ATP is bound at residue 252–255; the sequence is YAVE. Residue histidine 263 participates in Zn(2+) binding. Residues lysine 274 and 288-292 contribute to the ATP site; that span reads SYYIK.

This sequence belongs to the mab-21 family. Mg(2+) is required as a cofactor. Mn(2+) serves as cofactor.

The enzyme catalyses GTP + ATP = 3',2'-cGAMP + 2 diphosphate. It catalyses the reaction GTP + ATP = 2',3'-cGAMP + 2 diphosphate. It carries out the reaction GTP + ATP = pppGp(2'-5')A + diphosphate. The catalysed reaction is pppA(2'-5')pG = 3',2'-cGAMP + diphosphate. The enzyme catalyses pppGp(2'-5')A = 2',3'-cGAMP + diphosphate. With respect to regulation, the enzyme activity is specifically activated by some nucleic acid. Nucleotidyltransferase that catalyzes the formation of cyclic GMP-AMP from ATP and GTP and plays a key role in antiviral innate immunity. Directly binds some unknown nucleic acid, activating the nucleotidyltransferase activity, leading to synthesis of both 3',2'-cGAMP and 2',3'-cGAMP second messengers. 3',2'-cGAMP and 2',3'-cGAMP bind to and activate Sting, thereby triggering the antiviral immune response via activation of the NF-kappa-B transcription factor Rel (Relish). This chain is Cyclic GMP-AMP synthase-like receptor 2, found in Drosophila melanogaster (Fruit fly).